Here is a 1888-residue protein sequence, read N- to C-terminus: MGCTVSLVCCEALEPLPSCGPQPPGTPPGPARPERCEPGGAAPDPRRRLLLQPEDLEAPKTHHFKVKAFKKVKPCGICRQAITREGCVCKVCSFSCHRKCQAKVAAPCVPPSSHELVPITTETVPKNVVDVGEGDCRVGSSPKNLEEGGSMRVSPSIQPQPQSQPTSLSRNTSVSRAMEDSCELDLVYVTERIIAVSFPSTANEENFRSNLREVAQMLKSKHGGNYLLFNLSEQRPDITKLHAKVLEFGWPDLHTPALEKICSVCKAMDTWLNADPHNVVVLHNKGNRGRIGVVIAAYLHYSNISASADQALDRFAMKRFYEDKIVPIGQPSQRRYVHYFSGLLSGSIKMNNKPLFLHHVIMHGIPNFESKGGCRPFLRIYQAMQPVYTSGIYNIPGDSQASICITIEPGLLLKGDILLKCYHKKFRSPARDVIFRVQFHTCAIHDLGVVFGKEDLDEAFKDDRFPDYGKVEFVFSYGPEKIQGMEHLENGPSVSVDYNTSDPLIRWDSYDNFSGHREDGMEEVVGHTQGPLDGSLYAKVKKKDSLNGSSGPVTTARPALSATPNHVEHTLSVSSDSGNSTASTKTDKTDEPVSGATTAPAALSPQEKKELDRLLSGFGVDREKQGAMYRAQQLRSHPGGGPTVPSPGRHIVPAQVHVNGGALASERETDILDDELPIQDGQSGGSMGTLSSLDGVTNTSESGYPETLSPLTNGLDKPYSTEPVLNGGGYPYEAANRVIPVHSSHSAPIRPSYSAQEGLAGYQREGPHPAWSQQVTSAHCGCDPSGLFRSQSFPDVEPQLPQAPTRGGSSREAVQRGLNSWQQQQPHPPPRQQERSPLQSLARSKPSPQLSAETPVAALPEFPRAASQQEIEQSIETLNMLMLDLEPASAAAPLHKSQSVPGAWPGASPLSSQPLLGSSRQSHPLTQSRSGYIPSGHSLGTPELVSSGRPYSPYDYQLHPAGSNQSFHPKSPASSTFLPSPHSSAGPQEPPASLPGLIAQPQLPPKETTSDPSRTPEEEPLNLEGLVAHRVAGVQARERQPAEPPGPLRRRAASDGQYENQSPEATSPRSPGVRSPVQCVSPELALTIALNPGGRPKEPHLHSYKEAFEEMEGTSPSSPPHSVARSPPGLAKTPLSALGLKPHNPADILLHPTGVARRLIQPEEDEGEEVTKPPEEPRSYVESVARTAVAGPRAQDVEPKSFSAPAAHAYGHETPLRNGTPGGSFVSPSPLSTSSPILSADSTSVGSFPSVVSSDQGPRTPFQPMLDSSIRSGSLGQPSPAALSYQSSSPVPVGGSSYNSPDYSLQPFSSSPESQGQPQYSAASVHMVPGSPQARHRTVGTNTPPSPGFGRRAVNPTMAAPGSPSLSHRQVMGPSGPGFHGNVVSGHPASAATTPGSPSLGRHPVGSHQVPGLHSSVVTTPGSPSLGRHPGAHQGNLASSLHSNAVISPGSPSLGRHLGGSGSVVPGSPSLDRHAAYGGYSTPEDRRPTLSRQSSASGYQAPSTPSFPVSPAYYPGLSSPATSPSPDSAAFRQGSPTPALPEKRRMSVGDRAGSLPNYATINGKVSSSPVANGMASGSSTVSFSHTLPDFSKYSMPDNSPETRAKVKFVQDTSKYWYKPEISREQAIALLKDQEPGAFIIRDSHSFRGAYGLAMKVSSPPPTITQQGKKGDMTHELVRHFLIETGPRGVKLKGCPNEPNFGSLSALVYQHSVIPLALPCKLVIPSRDPTDESKDSSGPANSTTDLLKQGAACNVLFVNSVDMESLTGPQAISKATSETLAADPTPAATIVHFKVSAQGITLTDNQRKLFFRRHYPLNTVTFCDLDPQERKWMKTEGGAPAKLFGFVARKQGSTTDNACHLFAELDPNQPASAIVNFVSKVMLSAGQKR.

Over residues 21 to 31 (PQPPGTPPGPA) the composition is skewed to pro residues. Residues 21–45 (PQPPGTPPGPARPERCEPGGAAPDP) are disordered. A Phorbol-ester/DAG-type zinc finger spans residues 61–108 (THHFKVKAFKKVKPCGICRQAITREGCVCKVCSFSCHRKCQAKVAAPC). Residues 132–174 (GEGDCRVGSSPKNLEEGGSMRVSPSIQPQPQSQPTSLSRNTSV) form a disordered region. The span at 154–167 (SPSIQPQPQSQPTS) shows a compositional bias: low complexity. Residues 175 to 347 (SRAMEDSCEL…HYFSGLLSGS (173 aa)) form the Phosphatase tensin-type domain. A C2 tensin-type domain is found at 352-478 (NKPLFLHHVI…GKVEFVFSYG (127 aa)). 2 positions are modified to phosphoserine: S509 and S535. Y537 carries the phosphotyrosine modification. 3 disordered regions span residues 543–608 (KDSL…PQEK), 696–722 (VTNT…YSTE), and 789–854 (RSQS…SAET). S549 carries the post-translational modification Phosphoserine. Polar residues predominate over residues 571–584 (LSVSSDSGNSTAST). Position 604 is a phosphoserine (S604). S792 is subject to Phosphoserine. Residues 835–852 (RSPLQSLARSKPSPQLSA) are compositionally biased toward polar residues. At S867 the chain carries Phosphoserine. 2 disordered regions span residues 893–1077 (PLHK…RSPV) and 1109–1555 (EEME…AGSL). Low complexity predominate over residues 905–922 (PGASPLSSQPLLGSSRQS). A phosphoserine mark is found at S930, S935, and S952. Residues 962–986 (GSNQSFHPKSPASSTFLPSPHSSAG) show a composition bias toward polar residues. Position 1015 is a phosphothreonine (T1015). Phosphoserine is present on S1054. Residues 1057 to 1069 (QYENQSPEATSPR) show a composition bias toward polar residues. The residue at position 1058 (Y1058) is a Phosphotyrosine. Phosphoserine is present on residues S1062, S1118, and S1122. A compositionally biased stretch (basic and acidic residues) spans 1169-1179 (EVTKPPEEPRS). A compositionally biased stretch (low complexity) spans 1227 to 1239 (SPSPLSTSSPILS). The segment covering 1240–1257 (ADSTSVGSFPSVVSSDQG) has biased composition (polar residues). Residue S1279 is modified to Phosphoserine. Residues 1284–1300 (SYQSSSPVPVGGSSYNS) are compositionally biased toward low complexity. Residues 1301 to 1322 (PDYSLQPFSSSPESQGQPQYSA) are compositionally biased toward polar residues. S1321 carries O-linked (GalNAc...) serine glycosylation. The residue at position 1331 (S1331) is a Phosphoserine. T1343 bears the Phosphothreonine mark. A Phosphoserine modification is found at S1346. T1420 carries the phosphothreonine modification. S1423 carries the post-translational modification Phosphoserine. Over residues 1436–1446 (NLASSLHSNAV) the composition is skewed to polar residues. A phosphoserine mark is found at S1448, S1463, and S1468. The segment covering 1490-1507 (LSRQSSASGYQAPSTPSF) has biased composition (polar residues). Residues 1518–1530 (SSPATSPSPDSAA) are compositionally biased toward low complexity. Phosphoserine is present on residues S1535, S1547, S1554, and S1599. In terms of domain architecture, SH2 spans 1616–1725 (WYKPEISREQ…ALPCKLVIPS (110 aa)). Phosphoserine is present on S1741. The PTB domain occupies 1751-1885 (ACNVLFVNSV…FVSKVMLSAG (135 aa)).

This sequence belongs to the PTEN phosphatase protein family. In terms of assembly, binds to actin filaments and interacts with phosphotyrosine-containing proteins. Interacts with STARD8. Interacts with protein phosphatase PPP1CA. Interacts (via N-terminus) with Rho GTPase-activating protein DLC1; the interaction is decreased by phosphorylation of TNS1. Interacts with tyrosine-phosphorylated proteins BCAR1/p130Cas and PTK2/FAK; the interactions are increased by phosphorylation of TNS1. In terms of processing, extensively phosphorylated on serine and threonine residues in a p38 MAPK-dependent manner which reduces interaction with DLC1 and increases interaction with tyrosine-phosphorylated proteins including BCAR1/p130cas and PTK2/FAK. The majority of the phosphorylated Ser/Thr residues are immediately adjacent to a proline residue. Also phosphorylated on tyrosine residues. Rapidly cleaved by calpain II.

The protein localises to the cell surface. Its subcellular location is the cell junction. The protein resides in the focal adhesion. It is found in the cytoplasm. It localises to the cytoskeleton. In terms of biological role, may act as a protein phosphatase and/or a lipid phosphatase. Involved in fibrillar adhesion formation. Essential for myofibroblast differentiation and myofibroblast-mediated extracellular matrix deposition. Enhances RHOA activation in the presence of DLC1. Plays a role in cell polarization and migration. May be involved in cartilage development and in linking signal transduction pathways to the cytoskeleton. In Mus musculus (Mouse), this protein is Tensin-1.